Reading from the N-terminus, the 182-residue chain is Oligoribonuclease (182 aa).

In terms of domain architecture, Exonuclease spans 8–171 (LIWIDLEMTG…DDIRESIKEL (164 aa)). Tyr129 is a catalytic residue.

This sequence belongs to the oligoribonuclease family.

It is found in the cytoplasm. In terms of biological role, 3'-to-5' exoribonuclease specific for small oligoribonucleotides. This Actinobacillus succinogenes (strain ATCC 55618 / DSM 22257 / CCUG 43843 / 130Z) protein is Oligoribonuclease.